We begin with the raw amino-acid sequence, 398 residues long: Ornithine aminotransferase (398 aa).

The residue at position 255 (Lys255) is an N6-(pyridoxal phosphate)lysine.

This sequence belongs to the class-III pyridoxal-phosphate-dependent aminotransferase family. OAT subfamily. It depends on pyridoxal 5'-phosphate as a cofactor.

Its subcellular location is the cytoplasm. It carries out the reaction a 2-oxocarboxylate + L-ornithine = L-glutamate 5-semialdehyde + an L-alpha-amino acid. It participates in amino-acid biosynthesis; L-proline biosynthesis; L-glutamate 5-semialdehyde from L-ornithine: step 1/1. Its function is as follows. Catalyzes the interconversion of ornithine to glutamate semialdehyde. This is Ornithine aminotransferase from Geobacillus sp. (strain WCH70).